The following is a 274-amino-acid chain: NH(3)-dependent NAD(+) synthetase (274 aa).

Position 46 to 53 (46 to 53) interacts with ATP; it reads GISGGQDS. D52 is a Mg(2+) binding site. A deamido-NAD(+)-binding site is contributed by R140. ATP is bound at residue T160. A Mg(2+)-binding site is contributed by E165. Residues K173 and D180 each coordinate deamido-NAD(+). Residues K189 and T211 each coordinate ATP. Residue 260 to 261 participates in deamido-NAD(+) binding; it reads HK.

This sequence belongs to the NAD synthetase family. Homodimer.

It catalyses the reaction deamido-NAD(+) + NH4(+) + ATP = AMP + diphosphate + NAD(+) + H(+). The protein operates within cofactor biosynthesis; NAD(+) biosynthesis; NAD(+) from deamido-NAD(+) (ammonia route): step 1/1. In terms of biological role, catalyzes the ATP-dependent amidation of deamido-NAD to form NAD. Uses ammonia as a nitrogen source. This chain is NH(3)-dependent NAD(+) synthetase, found in Lactococcus lactis subsp. cremoris (strain SK11).